The following is a 210-amino-acid chain: Large ribosomal subunit protein uL3 (210 aa).

The interval 125-151 is disordered; sequence HGFGGGPRTHGQSDRLRAPGSIGAGTD.

The protein belongs to the universal ribosomal protein uL3 family. Part of the 50S ribosomal subunit. Forms a cluster with proteins L14 and L19.

In terms of biological role, one of the primary rRNA binding proteins, it binds directly near the 3'-end of the 23S rRNA, where it nucleates assembly of the 50S subunit. This is Large ribosomal subunit protein uL3 from Roseiflexus sp. (strain RS-1).